The primary structure comprises 126 residues: Profilin (126 aa).

It belongs to the profilin family. In terms of assembly, occurs in many kinds of cells as a complex with monomeric actin in a 1:1 ratio. In terms of tissue distribution, expressed in ovary and head.

It localises to the cytoplasm. The protein resides in the cytoskeleton. Its function is as follows. Binds to actin and affects the structure of the cytoskeleton. At high concentrations, profilin prevents the polymerization of actin, whereas it enhances it at low concentrations. By binding to PIP2, it may inhibit the formation of IP3 and DG. This profilin is required for intercellular cytoplasm transport during Drosophila oogenesis. Function in neurons is essential for adult survival, and is important for climbing behavior and activity. The protein is Profilin (chic) of Drosophila melanogaster (Fruit fly).